A 429-amino-acid polypeptide reads, in one-letter code: Glucose-1-phosphate adenylyltransferase (429 aa).

Residues Gly162, Glu177–Lys178, and Ser209 each bind alpha-D-glucose 1-phosphate.

The protein belongs to the bacterial/plant glucose-1-phosphate adenylyltransferase family. Homotetramer.

The enzyme catalyses alpha-D-glucose 1-phosphate + ATP + H(+) = ADP-alpha-D-glucose + diphosphate. Its pathway is glycan biosynthesis; glycogen biosynthesis. In terms of biological role, involved in the biosynthesis of ADP-glucose, a building block required for the elongation reactions to produce glycogen. Catalyzes the reaction between ATP and alpha-D-glucose 1-phosphate (G1P) to produce pyrophosphate and ADP-Glc. The chain is Glucose-1-phosphate adenylyltransferase from Cyanothece sp. (strain PCC 7425 / ATCC 29141).